The primary structure comprises 419 residues: Serine--tRNA ligase (419 aa).

An L-serine-binding site is contributed by 226-228 (TSE). Residues 257–259 (RRE) and Val273 each bind ATP. An L-serine-binding site is contributed by Glu280. ATP is bound at residue 344–347 (ELTS). Residue Thr379 participates in L-serine binding.

This sequence belongs to the class-II aminoacyl-tRNA synthetase family. Type-1 seryl-tRNA synthetase subfamily. In terms of assembly, homodimer. The tRNA molecule binds across the dimer.

It is found in the cytoplasm. The enzyme catalyses tRNA(Ser) + L-serine + ATP = L-seryl-tRNA(Ser) + AMP + diphosphate + H(+). It catalyses the reaction tRNA(Sec) + L-serine + ATP = L-seryl-tRNA(Sec) + AMP + diphosphate + H(+). It functions in the pathway aminoacyl-tRNA biosynthesis; selenocysteinyl-tRNA(Sec) biosynthesis; L-seryl-tRNA(Sec) from L-serine and tRNA(Sec): step 1/1. Its function is as follows. Catalyzes the attachment of serine to tRNA(Ser). Is also able to aminoacylate tRNA(Sec) with serine, to form the misacylated tRNA L-seryl-tRNA(Sec), which will be further converted into selenocysteinyl-tRNA(Sec). The chain is Serine--tRNA ligase from Mycobacterium marinum (strain ATCC BAA-535 / M).